A 580-amino-acid polypeptide reads, in one-letter code: Myb-like protein C (580 aa).

Disordered stretches follow at residues 1 to 58 (MTMI…YGSN), 73 to 101 (QYSI…TLLS), 121 to 203 (NVYN…SSTN), and 354 to 380 (SDND…NPPN). 3 stretches are compositionally biased toward low complexity: residues 20-47 (NNNN…NNNN), 87-101 (NSTM…TLLS), and 126-203 (PHQS…SSTN). The span at 361–371 (KKKRERIRKSV) shows a compositional bias: basic residues. 2 consecutive HTH myb-type domains span residues 368–430 (RKSV…CPAI) and 431–482 (RKGS…SREV). DNA-binding regions (H-T-H motif) lie at residues 402 to 426 (WKKI…KRVL) and 454 to 478 (WKNV…KSCM). Residues 484 to 546 (WSSREDEILQ…ECKTRYFQLN (63 aa)) form the Myb-like domain.

Its subcellular location is the nucleus. In terms of biological role, transcription activator required for the culmination, at the time of the fruiting body formation. Regulates genes involved in the cell differentiation within the fruiting body. This chain is Myb-like protein C (mybC), found in Dictyostelium discoideum (Social amoeba).